The following is a 330-amino-acid chain: Cyclin-dependent kinase 7 (330 aa).

In terms of domain architecture, Protein kinase spans 5 to 289 (YDTIKHLGEG…CTQSLQMEYF (285 aa)). ATP-binding positions include 11–19 (LGEGQFANV) and lysine 34. Aspartate 130 (proton acceptor) is an active-site residue. Threonine 163 carries the phosphothreonine modification. The segment at 305–330 (KKQQPQKRSRRLDDDGTRPVRRLNFD) is disordered. Positions 315–330 (RLDDDGTRPVRRLNFD) are enriched in basic and acidic residues.

It belongs to the protein kinase superfamily. CMGC Ser/Thr protein kinase family. CDC2/CDKX subfamily. As to quaternary structure, catalytic component which, in association with cyclin H (cyh-1) and mat1, is likely to form the CAK complex.

The catalysed reaction is L-seryl-[protein] + ATP = O-phospho-L-seryl-[protein] + ADP + H(+). The enzyme catalyses L-threonyl-[protein] + ATP = O-phospho-L-threonyl-[protein] + ADP + H(+). It catalyses the reaction [DNA-directed RNA polymerase] + ATP = phospho-[DNA-directed RNA polymerase] + ADP + H(+). Its function is as follows. Serine/threonine kinase involved in cell cycle control and in RNA polymerase II-mediated RNA transcription. Required for maintaining chromosome ploidy. May phosphorylate the large subunit of RNA polymerase II, ama-1. The protein is Cyclin-dependent kinase 7 of Caenorhabditis elegans.